The following is a 472-amino-acid chain: Ribosomal protein uS12 methylthiotransferase RimO (472 aa).

The MTTase N-terminal domain maps to 1-114 (MKFHIITLGC…IGDVVDTLQR (114 aa)). The [4Fe-4S] cluster site is built by Cys-10, Cys-46, Cys-78, Cys-171, Cys-175, and Cys-178. Positions 157 to 388 (RITGPSAYLK…MRLQQGISRQ (232 aa)) constitute a Radical SAM core domain. The TRAM domain maps to 391 to 460 (RRWVGRVIRV…DYDLWGEMVE (70 aa)).

The protein belongs to the methylthiotransferase family. RimO subfamily. [4Fe-4S] cluster serves as cofactor.

It localises to the cytoplasm. It carries out the reaction L-aspartate(89)-[ribosomal protein uS12]-hydrogen + (sulfur carrier)-SH + AH2 + 2 S-adenosyl-L-methionine = 3-methylsulfanyl-L-aspartate(89)-[ribosomal protein uS12]-hydrogen + (sulfur carrier)-H + 5'-deoxyadenosine + L-methionine + A + S-adenosyl-L-homocysteine + 2 H(+). In terms of biological role, catalyzes the methylthiolation of an aspartic acid residue of ribosomal protein uS12. This chain is Ribosomal protein uS12 methylthiotransferase RimO, found in Roseiflexus sp. (strain RS-1).